The primary structure comprises 67 residues: MMSKLGVLLITCLLLFPLTAVPLDGDQPADQPAERLQDDISSENHPFFDPVKRCCRLLCLSCNPCCG.

An N-terminal signal peptide occupies residues 1-20 (MMSKLGVLLITCLLLFPLTA). A propeptide spanning residues 21 to 53 (VPLDGDQPADQPAERLQDDISSENHPFFDPVKR) is cleaved from the precursor. Intrachain disulfides connect Cys54/Cys66, Cys55/Cys62, and Cys59/Cys65. Pro64 carries the 4-hydroxyproline modification. At Cys66 the chain carries Cysteine amide.

This sequence belongs to the conotoxin M superfamily. In terms of tissue distribution, expressed by the venom duct.

Its subcellular location is the secreted. This is Conotoxin TxMMSK-01 from Conus textile (Cloth-of-gold cone).